Reading from the N-terminus, the 90-residue chain is Interferon alpha-inducible protein 27-like protein 2A (90 aa).

The first 24 residues, M1–A24, serve as a signal peptide directing secretion. 2 consecutive transmembrane segments (helical) span residues F28–I48 and G67–L89.

Belongs to the IFI6/IFI27 family. In terms of assembly, homodimer. Interacts with SKP2. Interacts with NR4A1. May interact with BCL2.

It is found in the nucleus inner membrane. May be involved in the interferon-induced negative regulation of the transcriptional activity of NR4A1, NR4A2 and NR4A3 through the enhancement of XPO1-mediated nuclear export of these nuclear receptors. Through the regulation of NR4A1 transcriptional activity, may play a role in the vascular response to injury. This chain is Interferon alpha-inducible protein 27-like protein 2A, found in Mus musculus (Mouse).